The sequence spans 124 residues: BLOC-1-related complex subunit 8 (124 aa).

A disordered region spans residues 102 to 124 (SSSQGRSAVINPNETPAHTSVTP).

It belongs to the BORCS8 family.

Its subcellular location is the lysosome membrane. Its function is as follows. As part of a BORC-like complex, it may play a role in the movement and localization of lysosomes at the cell periphery. Associated with the cytosolic face of lysosomes, this complex may couple lysosomes to microtubule plus-end-directed kinesin motors, driving lysosome movement toward the cell periphery. The polypeptide is BLOC-1-related complex subunit 8 (Danio rerio (Zebrafish)).